Consider the following 119-residue polypeptide: Large ribosomal subunit protein bL20 (119 aa).

The protein belongs to the bacterial ribosomal protein bL20 family.

In terms of biological role, binds directly to 23S ribosomal RNA and is necessary for the in vitro assembly process of the 50S ribosomal subunit. It is not involved in the protein synthesizing functions of that subunit. This chain is Large ribosomal subunit protein bL20, found in Acinetobacter baylyi (strain ATCC 33305 / BD413 / ADP1).